The primary structure comprises 715 residues: Solute carrier organic anion transporter family member 1C1 (715 aa).

The Cytoplasmic segment spans residues 1-43 (MDTSSKENAHLFHKNSAQPAGGPSFTVGYPSTEEARPCCGKLK). A helical membrane pass occupies residues 44–63 (VFLGALSFVYFAKALAEGYL). At 64-82 (KSTVTQIERRFEIPSSLVG) the chain is on the extracellular side. A helical membrane pass occupies residues 83–103 (IIDGSFEIGNLLVITFVSYFG). Topologically, residues 104-109 (AKLHRP) are cytoplasmic. A helical transmembrane segment spans residues 110–134 (KIIGAGCLVMGFGTMLIAVPQFFME). The Extracellular portion of the chain corresponds to 135 to 187 (KYSYEKYERYSPSSNVTPSISPCYLESSSPSPSSILGKSQNKISHECVGDSSS). A helical transmembrane segment spans residues 188–216 (SMWVYVFLGNLLRGLGETPIQPLGIAYLD). At 217 to 235 (DFASEDNAAFYIGCVQTVA) the chain is on the cytoplasmic side. The helical transmembrane segment at 236 to 256 (IIGPIFGFLLGSLCAKLYVDI) threads the bilayer. Residues 257 to 274 (GFVNLDHITITPKDPQWV) are Extracellular-facing. A helical membrane pass occupies residues 275–299 (GAWWLGYLIAGFLSLLAAVPFWCLP). Topologically, residues 300-351 (KTLPRSQSRENSGSTSEKSKFIDDPIHYQMAPGDDKMKIMEMAKDFLPSLKT) are cytoplasmic. The helical transmembrane segment at 352–373 (LFRNPVYILYLCASTVQFNSLF) threads the bilayer. Residues 374 to 393 (GMVTYKPKYIEQQYGQSSSK) are Extracellular-facing. Residues 394 to 417 (ANFVIGLINIPAVALGIFSGGIVM) traverse the membrane as a helical segment. The Cytoplasmic portion of the chain corresponds to 418 to 421 (KKFR). The chain crosses the membrane as a helical span at residues 422–445 (LGICEATKLYLGSSVFGYLLFLSL). At 446–557 (FALGCENSSV…NGCSQMFLYF (112 aa)) the chain is on the extracellular side. Asn-452 is a glycosylation site (N-linked (GlcNAc...) asparagine). The 56-residue stretch at 473–528 (RALFSDCNSRCKCSDSKWEPMCGDNGITYVSACLAGCQSSSRSGKNIIFSNCTCVG) folds into the Kazal-like domain. Disulfide bonds link Cys-479–Cys-509, Cys-485–Cys-505, and Cys-494–Cys-526. N-linked (GlcNAc...) asparagine glycans are attached at residues Asn-523 and Asn-536. Residues 558-580 (LVISVITSYTLSLGGIPGYILLL) form a helical membrane-spanning segment. Residues 581 to 589 (RCIQPQLKS) are Cytoplasmic-facing. The chain crosses the membrane as a helical span at residues 590–615 (FALGIYTLAVRVLAGIPAPVYFGVLI). The Extracellular portion of the chain corresponds to 616 to 649 (DTSCLKWGFKKCGSRGSCRLYDSHAFRHIYLGLT). A helical transmembrane segment spans residues 650-667 (TLLGTVSVFLSMAVLFVL). The Cytoplasmic segment spans residues 668–715 (KKKYVSKHSSLITTREKIGMSSSIKKETCAARDRGLQPKYWPGKETRL).

It belongs to the organo anion transporter (TC 2.A.60) family. In terms of tissue distribution, widely expressed throughout the brain except in the cerebellum. Not detected in kidney, heart, lung, skeletal muscle, spleen, liver, nor testis. Highly expressed in cerebral microvessels throughout the brain and in the choroid plexus (at mRNA and protein level).

It is found in the cell membrane. The enzyme catalyses 3,3',5'-triiodo-L-thyronine(out) = 3,3',5'-triiodo-L-thyronine(in). The catalysed reaction is L-thyroxine(out) = L-thyroxine(in). It catalyses the reaction L-thyroxine sulfate(out) = L-thyroxine sulfate(in). It carries out the reaction 17beta-estradiol 17-O-(beta-D-glucuronate)(out) = 17beta-estradiol 17-O-(beta-D-glucuronate)(in). The enzyme catalyses 3,3',5-triiodo-L-thyronine(out) = 3,3',5-triiodo-L-thyronine(in). Its function is as follows. Mediates the Na(+)-independent high affinity transport of thyroid hormones at the plasma membrane of brain capillary endothelial cells. The transport activity of substrates L-thyroxine (T4) and 3,3',5'-triiodo-L-thyronine (reverse T3, rT3) is much greater than that of 3,3',5-triiodo-L-thyronine (T3). The prehormone, T4, is the major form in the circulating blood and is converted to the active form, T3, by the iodothyronine-deiodinase in peripheral organs. T3 plays an essential role in brain development via binding to specific nuclear receptors (thyroid hormone receptor). Also transports organic anions such as the conjugated steroid 17-beta-glucuronosyl estradiol (17beta-estradiol 17-O-(beta-D-glucuronate)). Transports T4 and estrone-3-sulfate in a pH-insensitive manner. May serve as a drug efflux system at the blood brain barrier. This chain is Solute carrier organic anion transporter family member 1C1 (Slco1c1), found in Mus musculus (Mouse).